A 247-amino-acid chain; its full sequence is Probable transcriptional regulatory protein SynWH7803_1972 (247 aa).

This sequence belongs to the TACO1 family.

Its subcellular location is the cytoplasm. This Synechococcus sp. (strain WH7803) protein is Probable transcriptional regulatory protein SynWH7803_1972.